Consider the following 251-residue polypeptide: Phosphate import ATP-binding protein PstB 2 (251 aa).

The ABC transporter domain maps to 5–246 (ISAKDVHLSY…PKKQITSDYL (242 aa)). 37–44 (GPSGCGKS) contributes to the ATP binding site.

The protein belongs to the ABC transporter superfamily. Phosphate importer (TC 3.A.1.7) family. The complex is composed of two ATP-binding proteins (PstB), two transmembrane proteins (PstC and PstA) and a solute-binding protein (PstS).

Its subcellular location is the cell membrane. It catalyses the reaction phosphate(out) + ATP + H2O = ADP + 2 phosphate(in) + H(+). In terms of biological role, part of the ABC transporter complex PstSACB involved in phosphate import. Responsible for energy coupling to the transport system. The protein is Phosphate import ATP-binding protein PstB 2 of Lactobacillus acidophilus (strain ATCC 700396 / NCK56 / N2 / NCFM).